We begin with the raw amino-acid sequence, 416 residues long: Cytochrome P450 monooxygenase PikC (416 aa).

Residues E94, 187–191 (AQTAM), and 238–246 (HILLVAGHE) contribute to the substrate site. Residue C354 participates in heme binding.

The protein belongs to the cytochrome P450 family. Heme is required as a cofactor.

It catalyses the reaction narbomycin + 2 reduced [2Fe-2S]-[ferredoxin] + O2 + 2 H(+) = pikromycin + 2 oxidized [2Fe-2S]-[ferredoxin] + H2O. The catalysed reaction is narbomycin + 2 reduced [2Fe-2S]-[ferredoxin] + O2 + 2 H(+) = neopikromycin + 2 oxidized [2Fe-2S]-[ferredoxin] + H2O. It carries out the reaction narbomycin + 4 reduced [2Fe-2S]-[ferredoxin] + 2 O2 + 4 H(+) = novapikromycin + 4 oxidized [2Fe-2S]-[ferredoxin] + 2 H2O. The enzyme catalyses 10-deoxymethymycin + 2 reduced [2Fe-2S]-[ferredoxin] + O2 + 2 H(+) = methymycin + 2 oxidized [2Fe-2S]-[ferredoxin] + H2O. It catalyses the reaction 10-deoxymethymycin + 2 reduced [2Fe-2S]-[ferredoxin] + O2 + 2 H(+) = neomethymycin + 2 oxidized [2Fe-2S]-[ferredoxin] + H2O. The catalysed reaction is 10-deoxymethymycin + 4 reduced [2Fe-2S]-[ferredoxin] + 2 O2 + 4 H(+) = novamethymycin + 4 oxidized [2Fe-2S]-[ferredoxin] + 2 H2O. The protein operates within antibiotic biosynthesis. Its function is as follows. Catalyzes the hydroxylation of narbomycin to give rise to pikromycin, and of 10-deoxymethymycin (YC-17) to give rise to methymycin and neomethymycin during macrolide antibiotic biosynthesis. In addition, produces low amounts of neopicromycin, novapikromycin and novamethymycin. Requires the participation of a ferredoxin and a ferredoxin reductase for the transfer of electrons from NADPH to the monooxygenase. The chain is Cytochrome P450 monooxygenase PikC from Streptomyces venezuelae.